Reading from the N-terminus, the 113-residue chain is Beta-microseminoprotein (113 aa).

The first 20 residues, 1–20 (MEAWLGSLLFLATMVIASKA), serve as a signal peptide directing secretion. 5 cysteine pairs are disulfide-bonded: C22-C69, C38-C61, C56-C92, C59-C68, and C83-C106.

Belongs to the beta-microseminoprotein family. As to quaternary structure, homodimer; Interacts with PI16.

Its subcellular location is the secreted. This chain is Beta-microseminoprotein (Msmb), found in Mus musculus (Mouse).